A 602-amino-acid polypeptide reads, in one-letter code: T-box transcription factor TBX15 (602 aa).

The tract at residues 46 to 84 (ALSPAGPLGDTEDAAAHGLEPHPDSEQSTGSDSEVLTER) is disordered. The span at 71–84 (EQSTGSDSEVLTER) shows a compositional bias: polar residues. The segment at residues 122–304 (LWKRFHDIGT…RNPFAKGFRD (183 aa)) is a DNA-binding region (T-box). The residue at position 330 (threonine 330) is a Phosphothreonine. Disordered regions lie at residues 338–369 (QKQQ…LSPS) and 425–447 (QSGT…PSLI). Positions 346-369 (GTSPTTSSTGTPSPSASSHLLSPS) are enriched in low complexity. A compositionally biased stretch (polar residues) spans 425-446 (QSGTTSATQPSETFMPQRTPSL).

As to quaternary structure, can form a heterodimer with TBX18.

Its subcellular location is the nucleus. Probable transcriptional regulator involved in the development of the skeleton of the limb, vertebral column and head. Acts by controlling the number of mesenchymal precursor cells and chondrocytes. This Homo sapiens (Human) protein is T-box transcription factor TBX15 (TBX15).